Here is a 268-residue protein sequence, read N- to C-terminus: MLELRLVQGSLLKKVLESLKDLVTDANFDCSASGFSLQAMDSSHVALVALLLRSEGFEHYRCDRNPSMGMNLNNMAKMLKCAGNDDIITLKADDGSDTVTFMFESPTQDKISDFEMKLMDIDSEHLGIPEAEYHAIVRMPSAEFARICKDLSSIGDTVVISVTKEGVKFSTRGDIGTANIVCRQNTTVDKPDEATIIEMNEPVSLTFALRYLNSFTKATPLSNNVTISLSSELPVVVEYKIAEMGYIRFYLAPKIEEDDEEQSLEYQA.

A DNA-binding region spans residues 61 to 80 (RCDRNPSMGMNLNNMAKMLK).

Belongs to the PCNA family.

It localises to the nucleus. In terms of biological role, this protein is an auxiliary protein of DNA polymerase delta and is involved in the control of eukaryotic DNA replication by increasing the polymerase's processibility during elongation of the leading strand. The chain is Proliferating cell nuclear antigen from Catharanthus roseus (Madagascar periwinkle).